The chain runs to 342 residues: Flagellar P-ring protein (342 aa).

Residues 1-19 (MKRVFLWLIFVLAFHKLLA) form the signal peptide.

This sequence belongs to the FlgI family. In terms of assembly, the basal body constitutes a major portion of the flagellar organelle and consists of four rings (L,P,S, and M) mounted on a central rod.

It localises to the periplasm. Its subcellular location is the bacterial flagellum basal body. In terms of biological role, assembles around the rod to form the L-ring and probably protects the motor/basal body from shearing forces during rotation. The protein is Flagellar P-ring protein of Helicobacter pylori (strain G27).